A 1048-amino-acid polypeptide reads, in one-letter code: FHIP family protein GJ17503 (1048 aa).

Positions 1-15 are enriched in polar residues; sequence MSWLRTSPLRQSLTR. The disordered stretch occupies residues 1–32; sequence MSWLRTSPLRQSLTRNSGSSGSGNSSATTTLR. The span at 16-26 shows a compositional bias: low complexity; that stretch reads NSGSSGSGNSS. S500 carries the phosphoserine modification. Disordered regions lie at residues 652-675, 813-871, and 924-984; these read TTTATSDTDLEHNNSSSIGSGRRD, APMH…KRRS, and ARGA…ESGL. Residues 816–838 show a composition bias toward low complexity; that stretch reads HQQHQQQQLQHTTNPTQQQQAQQ. 2 stretches are compositionally biased toward polar residues: residues 839 to 857 and 929 to 954; these read RSTYATLSAATPVQASPTS and QEQSRGNTCETSLSTAPRQEAQTAVV. A compositionally biased stretch (low complexity) spans 955 to 978; it reads SSSNSSIGGSTQTLSATHSSSTLH.

It belongs to the FHIP family.

The polypeptide is FHIP family protein GJ17503 (Drosophila virilis (Fruit fly)).